Reading from the N-terminus, the 957-residue chain is ADAMTS-like protein 2 (957 aa).

A signal peptide spans 1-29 (MDGRRQHPHWAWSLLAVAVVAGGAAPTEA). A TSP type-1 1 domain is found at 47–106 (AYWWGEWTKWTACSRSCGGGVTSQERHCLQQRRKSVPGTGNRTCVGTSKRYQLCRVQECP). Intrachain disulfides connect Cys-59/Cys-100, Cys-63/Cys-105, and Cys-74/Cys-90. 8 N-linked (GlcNAc...) asparagine glycosylation sites follow: Asn-87, Asn-374, Asn-435, Asn-482, Asn-518, Asn-530, Asn-539, and Asn-550. Polar residues predominate over residues 532-544 (SSEAPFPNTSASP). A disordered region spans residues 532–568 (SSEAPFPNTSASPPNLAGNRTHKARTRPKARKQGVSP). Residues 551–563 (RTHKARTRPKARK) are compositionally biased toward basic residues. TSP type-1 domains are found at residues 570–624 (DMYR…EFCA), 628–692 (CQPR…PACG), 694–742 (QWEM…TGPP), 743–801 (CDRQ…KNCP), 803–857 (HWLA…TCFE), and 859–914 (PCFK…QPCP). N-linked (GlcNAc...) asparagine glycosylation occurs at Asn-737. Asn-813 carries N-linked (GlcNAc...) asparagine glycosylation. Residues 918–956 (PDDSCQDQPGTNCALAIKVNLCGHWYYSKACCRSCRPPH) enclose the PLAC domain.

In terms of assembly, interacts with LTBP1. Glycosylated. Can be O-fucosylated by POFUT2 on a serine or a threonine residue found within the consensus sequence C1-X(2)-(S/T)-C2-G of the TSP type-1 repeat domains where C1 and C2 are the first and second cysteine residue of the repeat, respectively. Fucosylated repeats can then be further glycosylated by the addition of a beta-1,3-glucose residue by the glucosyltransferase, B3GALTL. Fucosylation mediates the efficient secretion of ADAMTS family members. Can also be C-glycosylated with one or two mannose molecules on tryptophan residues within the consensus sequence W-X-X-W of the TPRs, and N-glycosylated. These other glycosylations can also facilitate secretion.

The protein resides in the secreted. The chain is ADAMTS-like protein 2 (Adamtsl2) from Mus musculus (Mouse).